The sequence spans 319 residues: Alpha-hemolysin (319 aa).

Positions 1–26 (MKTRIVSSVTTTLLLGSILMNPVANA) are cleaved as a signal peptide.

This sequence belongs to the aerolysin family. In terms of assembly, self-assembles to form first a non-lytic oligomeric intermediate and then, a mushroom-shaped homoheptamer structure of 100 Angstroms in length and up to 100 Angstroms in diameter.

It is found in the secreted. In terms of biological role, alpha-toxin binds to the membrane of eukaryotic cells resulting in the release of low-molecular weight molecules and leading to an eventual osmotic lysis. Inhibits host neutrophil chemotaxis to the lesion region. Heptamer oligomerization and pore formation is required for lytic activity. The polypeptide is Alpha-hemolysin (hly) (Staphylococcus aureus (strain NCTC 8325 / PS 47)).